Reading from the N-terminus, the 315-residue chain is Acetyl-coenzyme A carboxylase carboxyl transferase subunit alpha (315 aa).

Residues 38-292 (RLQKKSNELT…KLRLKEDLAE (255 aa)) form the CoA carboxyltransferase C-terminal domain.

This sequence belongs to the AccA family. Acetyl-CoA carboxylase is a heterohexamer composed of biotin carboxyl carrier protein (AccB), biotin carboxylase (AccC) and two subunits each of ACCase subunit alpha (AccA) and ACCase subunit beta (AccD).

It is found in the cytoplasm. The catalysed reaction is N(6)-carboxybiotinyl-L-lysyl-[protein] + acetyl-CoA = N(6)-biotinyl-L-lysyl-[protein] + malonyl-CoA. It participates in lipid metabolism; malonyl-CoA biosynthesis; malonyl-CoA from acetyl-CoA: step 1/1. Its function is as follows. Component of the acetyl coenzyme A carboxylase (ACC) complex. First, biotin carboxylase catalyzes the carboxylation of biotin on its carrier protein (BCCP) and then the CO(2) group is transferred by the carboxyltransferase to acetyl-CoA to form malonyl-CoA. This is Acetyl-coenzyme A carboxylase carboxyl transferase subunit alpha from Haemophilus influenzae (strain 86-028NP).